The chain runs to 260 residues: Hydroxyethylthiazole kinase (260 aa).

Residue Met38 participates in substrate binding. Residues Arg114 and Thr159 each contribute to the ATP site. Gly186 is a substrate binding site.

The protein belongs to the Thz kinase family. Mg(2+) is required as a cofactor.

The catalysed reaction is 5-(2-hydroxyethyl)-4-methylthiazole + ATP = 4-methyl-5-(2-phosphooxyethyl)-thiazole + ADP + H(+). The protein operates within cofactor biosynthesis; thiamine diphosphate biosynthesis; 4-methyl-5-(2-phosphoethyl)-thiazole from 5-(2-hydroxyethyl)-4-methylthiazole: step 1/1. Catalyzes the phosphorylation of the hydroxyl group of 4-methyl-5-beta-hydroxyethylthiazole (THZ). The protein is Hydroxyethylthiazole kinase of Helicobacter pylori (strain G27).